The chain runs to 315 residues: Methionyl-tRNA formyltransferase (315 aa).

Residue 113–116 coordinates (6S)-5,6,7,8-tetrahydrofolate; the sequence is SLLP.

It belongs to the Fmt family.

It catalyses the reaction L-methionyl-tRNA(fMet) + (6R)-10-formyltetrahydrofolate = N-formyl-L-methionyl-tRNA(fMet) + (6S)-5,6,7,8-tetrahydrofolate + H(+). Its function is as follows. Attaches a formyl group to the free amino group of methionyl-tRNA(fMet). The formyl group appears to play a dual role in the initiator identity of N-formylmethionyl-tRNA by promoting its recognition by IF2 and preventing the misappropriation of this tRNA by the elongation apparatus. In Photorhabdus laumondii subsp. laumondii (strain DSM 15139 / CIP 105565 / TT01) (Photorhabdus luminescens subsp. laumondii), this protein is Methionyl-tRNA formyltransferase.